The chain runs to 430 residues: Adenylosuccinate synthetase (430 aa).

GTP is bound by residues 12–18 and 40–42; these read GDEGKGK and GHT. Residue D13 is the Proton acceptor of the active site. D13 and G40 together coordinate Mg(2+). IMP contacts are provided by residues 13-16, 38-41, T128, R142, Q223, T238, and R302; these read DEGK and NAGH. Catalysis depends on H41, which acts as the Proton donor. 298-304 is a substrate binding site; the sequence is TTTGRPR. GTP is bound by residues R304, 330–332, and 412–414; these read SID and SVG.

Belongs to the adenylosuccinate synthetase family. As to quaternary structure, homodimer. Mg(2+) serves as cofactor.

The protein localises to the cytoplasm. The enzyme catalyses IMP + L-aspartate + GTP = N(6)-(1,2-dicarboxyethyl)-AMP + GDP + phosphate + 2 H(+). Its pathway is purine metabolism; AMP biosynthesis via de novo pathway; AMP from IMP: step 1/2. Plays an important role in the de novo pathway of purine nucleotide biosynthesis. Catalyzes the first committed step in the biosynthesis of AMP from IMP. This Streptococcus pyogenes serotype M6 (strain ATCC BAA-946 / MGAS10394) protein is Adenylosuccinate synthetase.